Consider the following 146-residue polypeptide: General odorant-binding protein 19a (146 aa).

Residues 1–22 (MKFHLLLVCVAISLGPIPQSEA) form the signal peptide. Intrachain disulfides connect Cys40-Cys72, Cys68-Cys126, and Cys113-Cys135.

This sequence belongs to the PBP/GOBP family. In terms of tissue distribution, expressed in adult olfactory system. Expressed exclusively in a subset of chemosensory sensilla on the third antennal segment.

The protein localises to the secreted. Its function is as follows. Present in the aqueous fluid surrounding olfactory sensory dendrites and are thought to aid in the capture and transport of hydrophobic odorants into and through this fluid. The chain is General odorant-binding protein 19a (Obp19a) from Drosophila melanogaster (Fruit fly).